The chain runs to 347 residues: MGSFVKEETSSLMTDFLEKCGGYAVVDGGFATELQRHGADINDPLWSAKCLITSPHLVTKVHLDYLESGANIIITASYQATIQGFVAKGLSVGEAENLLRRSVEITYEAREIFYNRCTKGSWDFAYAGKASRRPILVAASVGSYGAYLADGSEYSGIYGDSVSKETLKDFHRRRVQILAKSGADLIAFETIPNKLEAEAYADLLEEEDIDIPAWFSFTSKDGVSVPRGDSVVECAKVADSCKNVVAIGINCTAPRYIHALIISLRQMTRKPIVVYPNSGEVYDGLNKKWIKSEGESEEDFVSYVSKWRDAGASLFGGCCRTTPNTIRAIAKVLSDEPSAASKPKFGQ.

A Hcy-binding domain is found at 12–333; that stretch reads LMTDFLEKCG…NTIRAIAKVL (322 aa). Zn(2+) is bound by residues Cys-251, Cys-318, and Cys-319.

As to quaternary structure, monomer. Requires Zn(2+) as cofactor. In terms of tissue distribution, expressed predominantly in rosette leaves. Expressed in roots, cauline leaves and developing seeds.

It carries out the reaction S-methyl-L-methionine + L-homocysteine = 2 L-methionine + H(+). Functionally, catalyzes methyl transfer from S-methylmethionine (SMM) to adenosyl-L-homocysteine (AdoMet). SMM degradation (by HMT-1, HMT-2 and HMT-3) and biosynthesis (by MMT1) constitute the SMM cycle in plants, which is probably required to achieve short term control of AdoMet level. In Arabidopsis thaliana (Mouse-ear cress), this protein is Homocysteine S-methyltransferase 3 (HMT3).